Consider the following 429-residue polypeptide: Carboxypeptidase B (429 aa).

A signal peptide spans 1-15 (MKFLLVLALCAVVYA). The 303-residue stretch at 121–423 (NYQELEVIDE…EGIVVGARRA (303 aa)) folds into the Peptidase M14 domain. Positions 182 and 185 each coordinate Zn(2+). Substrate contacts are provided by residues 182–185 (HARE), arginine 236, and 256–257 (NR). A disulfide bridge links cysteine 250 with cysteine 273. Histidine 309 serves as a coordination point for Zn(2+). Residues 310–311 (SF) and tyrosine 365 contribute to the substrate site. The Proton donor/acceptor role is filled by glutamate 387.

Belongs to the peptidase M14 family. Zn(2+) is required as a cofactor.

It localises to the secreted. It carries out the reaction Preferential release of a C-terminal lysine or arginine amino acid.. Its activity is regulated as follows. Highly resistant to inhibition by potato carboxypeptidase inhibitor (PCI). Moderately inhibited by leech carboxypeptidase inhibitor (LCI) and tick carboxypeptidase inhibitor (TCI). In terms of biological role, metalloprotease which cleaves a single amino acid from the C-terminal end of polypeptide chains. Shows a strong preference for peptides with a terminal lysine residue. This Helicoverpa zea (Corn earworm moth) protein is Carboxypeptidase B.